The sequence spans 247 residues: ATP synthase subunit a, chloroplastic (247 aa).

The next 5 membrane-spanning stretches (helical) occupy residues 38–58, 95–115, 134–154, 199–219, and 220–240; these read QVLI…ILII, VPFI…GALL, INTT…AGLS, LVVV…VMFL, and GLFT…AYIG.

Belongs to the ATPase A chain family. As to quaternary structure, F-type ATPases have 2 components, CF(1) - the catalytic core - and CF(0) - the membrane proton channel. CF(1) has five subunits: alpha(3), beta(3), gamma(1), delta(1), epsilon(1). CF(0) has four main subunits: a, b, b' and c.

The protein localises to the plastid. It is found in the chloroplast thylakoid membrane. Functionally, key component of the proton channel; it plays a direct role in the translocation of protons across the membrane. The polypeptide is ATP synthase subunit a, chloroplastic (Glycine max (Soybean)).